Here is a 156-residue protein sequence, read N- to C-terminus: 3-hydroxyacyl-[acyl-carrier-protein] dehydratase FabZ (156 aa).

Histidine 57 is a catalytic residue.

Belongs to the thioester dehydratase family. FabZ subfamily.

It localises to the cytoplasm. The catalysed reaction is a (3R)-hydroxyacyl-[ACP] = a (2E)-enoyl-[ACP] + H2O. Its function is as follows. Involved in unsaturated fatty acids biosynthesis. Catalyzes the dehydration of short chain beta-hydroxyacyl-ACPs and long chain saturated and unsaturated beta-hydroxyacyl-ACPs. The sequence is that of 3-hydroxyacyl-[acyl-carrier-protein] dehydratase FabZ from Anaeromyxobacter dehalogenans (strain 2CP-1 / ATCC BAA-258).